Here is a 188-residue protein sequence, read N- to C-terminus: Elongation factor P (188 aa).

An N6-(3,6-diaminohexanoyl)-5-hydroxylysine modification is found at lysine 34.

This sequence belongs to the elongation factor P family. Post-translationally, may be beta-lysylated on the epsilon-amino group of Lys-34 by the combined action of EpmA and EpmB, and then hydroxylated on the C5 position of the same residue by EpmC (if this protein is present). Lysylation is critical for the stimulatory effect of EF-P on peptide-bond formation. The lysylation moiety may extend toward the peptidyltransferase center and stabilize the terminal 3-CCA end of the tRNA. Hydroxylation of the C5 position on Lys-34 may allow additional potential stabilizing hydrogen-bond interactions with the P-tRNA.

It localises to the cytoplasm. It functions in the pathway protein biosynthesis; polypeptide chain elongation. Its function is as follows. Involved in peptide bond synthesis. Alleviates ribosome stalling that occurs when 3 or more consecutive Pro residues or the sequence PPG is present in a protein, possibly by augmenting the peptidyl transferase activity of the ribosome. Modification of Lys-34 is required for alleviation. The sequence is that of Elongation factor P from Actinobacillus pleuropneumoniae serotype 5b (strain L20).